A 316-amino-acid chain; its full sequence is Methionyl-tRNA formyltransferase (316 aa).

Ser110–Pro113 contacts (6S)-5,6,7,8-tetrahydrofolate.

The protein belongs to the Fmt family.

It carries out the reaction L-methionyl-tRNA(fMet) + (6R)-10-formyltetrahydrofolate = N-formyl-L-methionyl-tRNA(fMet) + (6S)-5,6,7,8-tetrahydrofolate + H(+). Attaches a formyl group to the free amino group of methionyl-tRNA(fMet). The formyl group appears to play a dual role in the initiator identity of N-formylmethionyl-tRNA by promoting its recognition by IF2 and preventing the misappropriation of this tRNA by the elongation apparatus. This is Methionyl-tRNA formyltransferase from Bacillus licheniformis (strain ATCC 14580 / DSM 13 / JCM 2505 / CCUG 7422 / NBRC 12200 / NCIMB 9375 / NCTC 10341 / NRRL NRS-1264 / Gibson 46).